A 522-amino-acid chain; its full sequence is Lysine--tRNA ligase (522 aa).

The short motif at 44-52 (PSGLPHIGT) is the 'HIGH' region element. A 'KMSKS' region motif is present at residues 290–294 (KISKS). Lysine 293 serves as a coordination point for ATP.

The protein belongs to the class-I aminoacyl-tRNA synthetase family.

It localises to the cytoplasm. It carries out the reaction tRNA(Lys) + L-lysine + ATP = L-lysyl-tRNA(Lys) + AMP + diphosphate. The protein is Lysine--tRNA ligase of Rickettsia bellii (strain OSU 85-389).